The following is a 79-amino-acid chain: Protein S100-G (79 aa).

Serine 2 carries the N-acetylserine modification. EF-hand domains lie at 13–48 and 45–79; these read IFEK…KGPN and KGPN…KISQ. Ca(2+) is bound by residues glutamine 26 and glutamate 31. Serine 42 bears the Phosphoserine mark. The Ca(2+) site is built by aspartate 58, asparagine 60, aspartate 62, glutamate 64, and glutamate 69.

The protein belongs to the S-100 family.

The sequence is that of Protein S100-G (S100G) from Homo sapiens (Human).